Reading from the N-terminus, the 235-residue chain is Protein fmp52-1, mitochondrial (235 aa).

Residues 1–36 constitute a mitochondrion transit peptide; sequence MANTALIGCTGMVGSFILNNLLAHPSVARVDTISRR.

It belongs to the FMP52 family.

The protein resides in the mitochondrion outer membrane. In Aspergillus oryzae (strain ATCC 42149 / RIB 40) (Yellow koji mold), this protein is Protein fmp52-1, mitochondrial (fmp521).